Reading from the N-terminus, the 311-residue chain is MSVVNNRVALKHLVSMEHLTNEEVMGLISRGSEYKAGKVAIKDNSRHFAANLFFENSTRTHKSFEVAENKLGLRVLDFNADTSAVNKGETLYDTVLTMSALGTEICVIRHPEDDYYQQLIDSPTITASIVNGGDGSGQHPSQCLLDLLTIYEEFGHFDGLKIAIAGDLTHSRVAKSNMQILKRLGAELYFYGPEQWYSSEFDSYGRYMAIDHIIDQLDVLMLLRVQHERHDGSQSFSKEDYHRQFGLTEERYRRLKDSAIIMHPAPVNRDVEIADHLVEAPKARIVAQMANGVFVRMAIIEAILNGRNENV.

Positions 59 and 60 each coordinate carbamoyl phosphate. Position 87 (K87) interacts with L-aspartate. The carbamoyl phosphate site is built by R109, H139, and Q142. Positions 172 and 224 each coordinate L-aspartate. Carbamoyl phosphate-binding residues include A265 and P266.

The protein belongs to the aspartate/ornithine carbamoyltransferase superfamily. ATCase family. As to quaternary structure, heterododecamer (2C3:3R2) of six catalytic PyrB chains organized as two trimers (C3), and six regulatory PyrI chains organized as three dimers (R2).

The catalysed reaction is carbamoyl phosphate + L-aspartate = N-carbamoyl-L-aspartate + phosphate + H(+). The protein operates within pyrimidine metabolism; UMP biosynthesis via de novo pathway; (S)-dihydroorotate from bicarbonate: step 2/3. Catalyzes the condensation of carbamoyl phosphate and aspartate to form carbamoyl aspartate and inorganic phosphate, the committed step in the de novo pyrimidine nucleotide biosynthesis pathway. The sequence is that of Aspartate carbamoyltransferase catalytic subunit from Streptococcus equi subsp. zooepidemicus (strain MGCS10565).